The sequence spans 389 residues: Galactokinase (389 aa).

Substrate is bound at residue Glu34–Asp37. Residues Ser68 and Gly125–Ser131 contribute to the ATP site. Residues Ser131 and Glu163 each coordinate Mg(2+). Asp175 serves as the catalytic Proton acceptor. Tyr225 lines the substrate pocket.

Belongs to the GHMP kinase family. GalK subfamily.

It is found in the cytoplasm. The enzyme catalyses alpha-D-galactose + ATP = alpha-D-galactose 1-phosphate + ADP + H(+). The protein operates within carbohydrate metabolism; galactose metabolism. Functionally, catalyzes the transfer of the gamma-phosphate of ATP to D-galactose to form alpha-D-galactose-1-phosphate (Gal-1-P). The chain is Galactokinase from Clostridium beijerinckii (strain ATCC 51743 / NCIMB 8052) (Clostridium acetobutylicum).